We begin with the raw amino-acid sequence, 319 residues long: MQKKDVCEYITKWVSVTISTLVTIGVLVFPLSSEAYPIFAQQNYESPREATGRIVCANCHLAKKPVEIEVPQAVLPDTVFEAVVKIPYDKQINQVLANGKPGGLNVGAVLILPEGFQLAPPERIPPELKEKIGNLYFQPYRPEKSNILVVGPVPGKTYSEMVFPILAPDPSVNKQAYFLKYPIYLGGNRGRGQIYPDGSKSNNTVYNSPVTGTITSITKNKKGASTVTIITTDNREVVELIPAGPTLLISEGDTVKADQPLTNNPNVGGFGQADAEIVLQDPLRIQGLLVFFASVVLAQIFLVLKKKQFEKVQLAEMNF.

An N-terminal signal peptide occupies residues 1–35; the sequence is MQKKDVCEYITKWVSVTISTLVTIGVLVFPLSSEA. 4 residues coordinate heme: Tyr-36, Cys-56, Cys-59, and His-60. Residues 285 to 305 traverse the membrane as a helical segment; it reads IQGLLVFFASVVLAQIFLVLK.

Belongs to the cytochrome f family. As to quaternary structure, the 4 large subunits of the cytochrome b6-f complex are cytochrome b6, subunit IV (17 kDa polypeptide, petD), cytochrome f and the Rieske protein, while the 4 small subunits are PetG, PetL, PetM and PetN. The complex functions as a dimer. Heme is required as a cofactor.

Its subcellular location is the plastid. It localises to the chloroplast thylakoid membrane. In terms of biological role, component of the cytochrome b6-f complex, which mediates electron transfer between photosystem II (PSII) and photosystem I (PSI), cyclic electron flow around PSI, and state transitions. The sequence is that of Cytochrome f from Zygnema circumcarinatum (Green alga).